Consider the following 402-residue polypeptide: tRNA pseudouridine synthase Pus10 (402 aa).

Aspartate 215 serves as the catalytic Nucleophile. The tract at residues 370 to 402 (ERGGHPGARGGTRRRPRKGPARPAGGRDRPRKT) is disordered. Residues 380-389 (GTRRRPRKGP) show a composition bias toward basic residues.

It belongs to the pseudouridine synthase Pus10 family.

It catalyses the reaction uridine(54) in tRNA = pseudouridine(54) in tRNA. It carries out the reaction uridine(55) in tRNA = pseudouridine(55) in tRNA. Its function is as follows. Responsible for synthesis of pseudouridine from uracil-54 and uracil-55 in the psi GC loop of transfer RNAs. This is tRNA pseudouridine synthase Pus10 from Cenarchaeum symbiosum (strain A).